A 166-amino-acid polypeptide reads, in one-letter code: Nucleotide-binding protein SUN_0226 (166 aa).

This sequence belongs to the YajQ family.

Its function is as follows. Nucleotide-binding protein. The polypeptide is Nucleotide-binding protein SUN_0226 (Sulfurovum sp. (strain NBC37-1)).